Reading from the N-terminus, the 191-residue chain is Thymidylate kinase (191 aa).

An ATP-binding site is contributed by 7–14 (GIDTAGKS).

It belongs to the thymidylate kinase family.

It carries out the reaction dTMP + ATP = dTDP + ADP. Functionally, phosphorylation of dTMP to form dTDP in both de novo and salvage pathways of dTTP synthesis. This Sulfurimonas denitrificans (strain ATCC 33889 / DSM 1251) (Thiomicrospira denitrificans (strain ATCC 33889 / DSM 1251)) protein is Thymidylate kinase.